The sequence spans 231 residues: LexA repressor (231 aa).

Positions 26-46 (FDEMKDALDLRSKSGIHRLIT) form a DNA-binding region, H-T-H motif. Catalysis depends on for autocatalytic cleavage activity residues S152 and K190.

Belongs to the peptidase S24 family. As to quaternary structure, homodimer.

The catalysed reaction is Hydrolysis of Ala-|-Gly bond in repressor LexA.. Functionally, represses a number of genes involved in the response to DNA damage (SOS response), including recA and lexA. In the presence of single-stranded DNA, RecA interacts with LexA causing an autocatalytic cleavage which disrupts the DNA-binding part of LexA, leading to derepression of the SOS regulon and eventually DNA repair. This is LexA repressor from Dinoroseobacter shibae (strain DSM 16493 / NCIMB 14021 / DFL 12).